The chain runs to 109 residues: Thiosulfate sulfurtransferase GlpE (109 aa).

A Rhodanese domain is found at 17–105 (HQQTAVLVDI…WHRHFPAEVA (89 aa)). The active-site Cysteine persulfide intermediate is the Cys65.

This sequence belongs to the GlpE family.

The protein resides in the cytoplasm. The enzyme catalyses thiosulfate + hydrogen cyanide = thiocyanate + sulfite + 2 H(+). It catalyses the reaction thiosulfate + [thioredoxin]-dithiol = [thioredoxin]-disulfide + hydrogen sulfide + sulfite + 2 H(+). Functionally, transferase that catalyzes the transfer of sulfur from thiosulfate to thiophilic acceptors such as cyanide or dithiols. May function in a CysM-independent thiosulfate assimilation pathway by catalyzing the conversion of thiosulfate to sulfite, which can then be used for L-cysteine biosynthesis. The polypeptide is Thiosulfate sulfurtransferase GlpE (Klebsiella pneumoniae (strain 342)).